We begin with the raw amino-acid sequence, 70 residues long: Cytochrome c oxidase subunit 8B, mitochondrial (70 aa).

The N-terminal 24 residues, 1–24 (MLSLRPALRLLQAPLRCWAVPKAH), are a transit peptide targeting the mitochondrion. At 25 to 35 (VSAKPAETPTS) the chain is on the mitochondrial matrix side. The helical transmembrane segment at 36-59 (PAEQAVGLSFIFITFLGPAGWILS) threads the bilayer. Topologically, residues 60–70 (HVENYKKRPRA) are mitochondrial intermembrane.

Belongs to the cytochrome c oxidase VIII family. In terms of assembly, component of the cytochrome c oxidase (complex IV, CIV), a multisubunit enzyme composed of 14 subunits. The complex is composed of a catalytic core of 3 subunits MT-CO1, MT-CO2 and MT-CO3, encoded in the mitochondrial DNA, and 11 supernumerary subunits COX4I, COX5A, COX5B, COX6A, COX6B, COX6C, COX7A, COX7B, COX7C, COX8 and NDUFA4, which are encoded in the nuclear genome. The complex exists as a monomer or a dimer and forms supercomplexes (SCs) in the inner mitochondrial membrane with NADH-ubiquinone oxidoreductase (complex I, CI) and ubiquinol-cytochrome c oxidoreductase (cytochrome b-c1 complex, complex III, CIII), resulting in different assemblies (supercomplex SCI(1)III(2)IV(1) and megacomplex MCI(2)III(2)IV(2)).

It localises to the mitochondrion inner membrane. Its pathway is energy metabolism; oxidative phosphorylation. Functionally, component of the cytochrome c oxidase, the last enzyme in the mitochondrial electron transport chain which drives oxidative phosphorylation. The respiratory chain contains 3 multisubunit complexes succinate dehydrogenase (complex II, CII), ubiquinol-cytochrome c oxidoreductase (cytochrome b-c1 complex, complex III, CIII) and cytochrome c oxidase (complex IV, CIV), that cooperate to transfer electrons derived from NADH and succinate to molecular oxygen, creating an electrochemical gradient over the inner membrane that drives transmembrane transport and the ATP synthase. Cytochrome c oxidase is the component of the respiratory chain that catalyzes the reduction of oxygen to water. Electrons originating from reduced cytochrome c in the intermembrane space (IMS) are transferred via the dinuclear copper A center (CU(A)) of subunit 2 and heme A of subunit 1 to the active site in subunit 1, a binuclear center (BNC) formed by heme A3 and copper B (CU(B)). The BNC reduces molecular oxygen to 2 water molecules using 4 electrons from cytochrome c in the IMS and 4 protons from the mitochondrial matrix. The protein is Cytochrome c oxidase subunit 8B, mitochondrial (COX8B) of Ateles belzebuth (White-bellied spider monkey).